The chain runs to 253 residues: 5-oxoprolinase subunit A (253 aa).

It belongs to the LamB/PxpA family. In terms of assembly, forms a complex composed of PxpA, PxpB and PxpC.

The catalysed reaction is 5-oxo-L-proline + ATP + 2 H2O = L-glutamate + ADP + phosphate + H(+). Catalyzes the cleavage of 5-oxoproline to form L-glutamate coupled to the hydrolysis of ATP to ADP and inorganic phosphate. The sequence is that of 5-oxoprolinase subunit A from Bacillus anthracis (strain CDC 684 / NRRL 3495).